The chain runs to 364 residues: tRNA 2-selenouridine synthase (364 aa).

The Rhodanese domain occupies Leu14–Ile137. Cys97 functions as the S-selanylcysteine intermediate in the catalytic mechanism.

This sequence belongs to the SelU family. As to quaternary structure, monomer.

The enzyme catalyses 5-methylaminomethyl-2-thiouridine(34) in tRNA + selenophosphate + (2E)-geranyl diphosphate + H2O + H(+) = 5-methylaminomethyl-2-selenouridine(34) in tRNA + (2E)-thiogeraniol + phosphate + diphosphate. It catalyses the reaction 5-methylaminomethyl-2-thiouridine(34) in tRNA + (2E)-geranyl diphosphate = 5-methylaminomethyl-S-(2E)-geranyl-thiouridine(34) in tRNA + diphosphate. The catalysed reaction is 5-methylaminomethyl-S-(2E)-geranyl-thiouridine(34) in tRNA + selenophosphate + H(+) = 5-methylaminomethyl-2-(Se-phospho)selenouridine(34) in tRNA + (2E)-thiogeraniol. It carries out the reaction 5-methylaminomethyl-2-(Se-phospho)selenouridine(34) in tRNA + H2O = 5-methylaminomethyl-2-selenouridine(34) in tRNA + phosphate. Involved in the post-transcriptional modification of the uridine at the wobble position (U34) of tRNA(Lys), tRNA(Glu) and tRNA(Gln). Catalyzes the conversion of 2-thiouridine (S2U-RNA) to 2-selenouridine (Se2U-RNA). Acts in a two-step process involving geranylation of 2-thiouridine (S2U) to S-geranyl-2-thiouridine (geS2U) and subsequent selenation of the latter derivative to 2-selenouridine (Se2U) in the tRNA chain. The polypeptide is tRNA 2-selenouridine synthase (Escherichia coli (strain SE11)).